Consider the following 233-residue polypeptide: UPF0173 metal-dependent hydrolase Acid345_3437 (233 aa).

Belongs to the UPF0173 family.

The sequence is that of UPF0173 metal-dependent hydrolase Acid345_3437 from Koribacter versatilis (strain Ellin345).